We begin with the raw amino-acid sequence, 534 residues long: Peptide chain release factor 3 (534 aa).

In terms of domain architecture, tr-type G spans Ala9–Gln278. Residues Ser18 to Thr25, Asp86 to His90, and Asn140 to Asp143 contribute to the GTP site.

It belongs to the TRAFAC class translation factor GTPase superfamily. Classic translation factor GTPase family. PrfC subfamily.

It is found in the cytoplasm. Functionally, increases the formation of ribosomal termination complexes and stimulates activities of RF-1 and RF-2. It binds guanine nucleotides and has strong preference for UGA stop codons. It may interact directly with the ribosome. The stimulation of RF-1 and RF-2 is significantly reduced by GTP and GDP, but not by GMP. The chain is Peptide chain release factor 3 from Xylella fastidiosa (strain M12).